We begin with the raw amino-acid sequence, 455 residues long: Probable glycine dehydrogenase (decarboxylating) subunit 1 (455 aa).

It belongs to the GcvP family. N-terminal subunit subfamily. In terms of assembly, the glycine cleavage system is composed of four proteins: P, T, L and H. In this organism, the P 'protein' is a heterodimer of two subunits.

It catalyses the reaction N(6)-[(R)-lipoyl]-L-lysyl-[glycine-cleavage complex H protein] + glycine + H(+) = N(6)-[(R)-S(8)-aminomethyldihydrolipoyl]-L-lysyl-[glycine-cleavage complex H protein] + CO2. Its function is as follows. The glycine cleavage system catalyzes the degradation of glycine. The P protein binds the alpha-amino group of glycine through its pyridoxal phosphate cofactor; CO(2) is released and the remaining methylamine moiety is then transferred to the lipoamide cofactor of the H protein. This chain is Probable glycine dehydrogenase (decarboxylating) subunit 1, found in Francisella philomiragia subsp. philomiragia (strain ATCC 25017 / CCUG 19701 / FSC 153 / O#319-036).